The primary structure comprises 214 residues: Pyrrolidone-carboxylate peptidase (214 aa).

Catalysis depends on residues Glu78, Cys141, and His165.

Belongs to the peptidase C15 family. As to quaternary structure, homotetramer.

The protein resides in the cytoplasm. The catalysed reaction is Release of an N-terminal pyroglutamyl group from a polypeptide, the second amino acid generally not being Pro.. In terms of biological role, removes 5-oxoproline from various penultimate amino acid residues except L-proline. The chain is Pyrrolidone-carboxylate peptidase from Streptococcus pneumoniae serotype 2 (strain D39 / NCTC 7466).